We begin with the raw amino-acid sequence, 586 residues long: Regulatory protein NPR3 (586 aa).

Ser10 bears the Phosphoserine mark. A BTB domain is found at 60–135 (SDAEIIVDGV…IYTGRLKPFP (76 aa)). The segment at 138-152 (VSTCVDPVCSHDCCR) adopts a C2HC NPR-type zinc-finger fold. The Zn(2+) site is built by Cys141, Cys146, His148, and Cys151. 3 ANK repeats span residues 261–291 (ERIG…TLDQ), 293–320 (NGLH…DVNY), and 324–353 (RGYT…NASE). The segment at 383–523 (ESSKARLCID…MAEYIDDDIL (141 aa)) is salicylic acid-binding core (SBC). Arg428 provides a ligand contact to salicylate. Residues 554–586 (YSKDKESKIARSCLSASSSPSSSSIRDDLHNTT) form a disordered region. Residues 565–577 (SCLSASSSPSSSS) show a composition bias toward low complexity.

The protein belongs to the plant 'ANKYRIN-BTB/POZ' family. 'NPR1-like' subfamily. In terms of assembly, forms homodimers and heterodimers with NPR4 in the presence of salicylic acid (SA). Interacts with TGA2, TGA3, TGA5 and TGA6. Interacts with CUL3A, a core component of the cullin-RING ubiquitin ligases (CRL). Interacts with TGA2 in vivo in the nucleus. Binds to NPR1; this interaction is promoted by association with SA, probably due to conformational changes.

It localises to the nucleus. The protein operates within protein modification; protein ubiquitination. Salicylic acid (SA)-binding substrate-specific adapter of an E3 ubiquitin-protein ligase complex (CUL3-RBX1-BTB) which mediates the ubiquitination and subsequent proteasomal degradation of NPR1 in response to SA. Together with NPR4, acts as receptor of salicylic acid to monitor immunity in a NPR1-dependent manner and induce systemic acquired resistance (SAR). Involved in the regulation of basal defense responses against pathogens, and may be implicated in the cross-talk between the SA- and JA-dependent signaling pathways. The chain is Regulatory protein NPR3 from Arabidopsis thaliana (Mouse-ear cress).